Consider the following 291-residue polypeptide: Phosphoribosylaminoimidazole-succinocarboxamide synthase (291 aa).

This sequence belongs to the SAICAR synthetase family.

It catalyses the reaction 5-amino-1-(5-phospho-D-ribosyl)imidazole-4-carboxylate + L-aspartate + ATP = (2S)-2-[5-amino-1-(5-phospho-beta-D-ribosyl)imidazole-4-carboxamido]succinate + ADP + phosphate + 2 H(+). It functions in the pathway purine metabolism; IMP biosynthesis via de novo pathway; 5-amino-1-(5-phospho-D-ribosyl)imidazole-4-carboxamide from 5-amino-1-(5-phospho-D-ribosyl)imidazole-4-carboxylate: step 1/2. This Candida maltosa (Yeast) protein is Phosphoribosylaminoimidazole-succinocarboxamide synthase (ADE1).